Reading from the N-terminus, the 366-residue chain is Chorismate synthase (366 aa).

Residues arginine 48 and arginine 54 each contribute to the NADP(+) site. FMN is bound by residues 125-127, 238-239, glycine 278, 293-297, and arginine 319; these read RSS, NA, and KPTSS.

This sequence belongs to the chorismate synthase family. Homotetramer. The cofactor is FMNH2.

It catalyses the reaction 5-O-(1-carboxyvinyl)-3-phosphoshikimate = chorismate + phosphate. It participates in metabolic intermediate biosynthesis; chorismate biosynthesis; chorismate from D-erythrose 4-phosphate and phosphoenolpyruvate: step 7/7. Its function is as follows. Catalyzes the anti-1,4-elimination of the C-3 phosphate and the C-6 proR hydrogen from 5-enolpyruvylshikimate-3-phosphate (EPSP) to yield chorismate, which is the branch point compound that serves as the starting substrate for the three terminal pathways of aromatic amino acid biosynthesis. This reaction introduces a second double bond into the aromatic ring system. The polypeptide is Chorismate synthase (Thiobacillus denitrificans (strain ATCC 25259 / T1)).